Consider the following 319-residue polypeptide: HPr kinase/phosphorylase (319 aa).

Catalysis depends on residues His-137 and Lys-158. 152-159 (GDSGVGKS) serves as a coordination point for ATP. Mg(2+) is bound at residue Ser-159. Asp-176 (proton acceptor; for phosphorylation activity. Proton donor; for dephosphorylation activity) is an active-site residue. The important for the catalytic mechanism of both phosphorylation and dephosphorylation stretch occupies residues 201 to 210 (MEIRGLGIIN). Glu-202 contacts Mg(2+). Residue Arg-243 is part of the active site. Residues 264 to 269 (PVRPGR) form an important for the catalytic mechanism of dephosphorylation region.

Belongs to the HPrK/P family. In terms of assembly, homohexamer. Mg(2+) is required as a cofactor.

It catalyses the reaction [HPr protein]-L-serine + ATP = [HPr protein]-O-phospho-L-serine + ADP + H(+). The catalysed reaction is [HPr protein]-O-phospho-L-serine + phosphate + H(+) = [HPr protein]-L-serine + diphosphate. Catalyzes the ATP- as well as the pyrophosphate-dependent phosphorylation of a specific serine residue in HPr, a phosphocarrier protein of the phosphoenolpyruvate-dependent sugar phosphotransferase system (PTS). HprK/P also catalyzes the pyrophosphate-producing, inorganic phosphate-dependent dephosphorylation (phosphorolysis) of seryl-phosphorylated HPr (P-Ser-HPr). The chain is HPr kinase/phosphorylase from Treponema pallidum subsp. pallidum (strain SS14).